The primary structure comprises 428 residues: U2 small nuclear ribonucleoprotein auxiliary factor 35 kDa subunit-related protein 2-like (428 aa).

The segment at 1 to 51 is disordered; sequence MASRQTAIPEKLSRKQYKAAMKKEKRKKRRQKMARLRALEAPPEEDDDVSA. Residues 23–35 are compositionally biased toward basic residues; the sequence is KEKRKKRRQKMAR. Residues 42-51 are compositionally biased toward acidic residues; that stretch reads PPEEDDDVSA. Residue S50 is modified to Phosphoserine. The C3H1-type 1 zinc finger occupies 157–185; the sequence is EKYRPSCPFYNKTGACRFGNRCSRKHDFP. Residues 189–295 form the RRM domain; the sequence is PTLLVKSMFT…RQLQCEFCPV (107 aa). Residues 297-324 form a C3H1-type 2 zinc finger; it reads RWKVAICGLFEMQKCPKGKHCNFLHVFR. Positions 339 to 428 are disordered; that stretch reads MSPPAWTGSS…PGPQSQSHRT (90 aa). S340 is modified (phosphoserine). Residues 351–366 are compositionally biased toward basic and acidic residues; the sequence is NSDRRERKDHHEEYYS. A compositionally biased stretch (low complexity) spans 367–377; the sequence is KSRSYHSGSYH. S375 is modified (phosphoserine). Residues 389–410 are compositionally biased toward basic residues; it reads SPHRWKKSHKQTTKSHERHSSR. Over residues 419–428 the composition is skewed to polar residues; that stretch reads PGPQSQSHRT.

As to quaternary structure, interacts with SF3B1. Interacts with ZCRB1. Highest expression levels are detected in the brain, and lower expression levels in other tissues like epididymis, testis, bone marrow or muscle. In testis, expressed in both Sertoli and spermatogenic cell.

The protein resides in the nucleus. Functionally, plays a role in splicing of the U12-type introns. Implicated also in removal of U2 introns positioned adjacent to a U12 intron. The chain is U2 small nuclear ribonucleoprotein auxiliary factor 35 kDa subunit-related protein 2-like from Mus musculus (Mouse).